A 273-amino-acid chain; its full sequence is MSKLQDVIVQEMKVKKRIDSAEEIMELKQFIKNYVQSHSFIKSLVLGISGGQDSTLVGKLVQMSVNELREEGIDCTFIAVKLPYGVQKDADEVDQALRFIEPDEIVTVNIKPAVDQSVQSLKEAGIVLTDFQKGNEKARERMKVQFSIASNRQGIVVGTDHSAENITGFYTKYGDGAADIAPIFGLNKRQGRQLLAYLGAPKELYEKTPTADLEDDKPQLPDEDALGVTYEAIDNYLEGKPVTPEEQKVIENHYIRNAHKRELAYTRYTWPKS.

Residue 47 to 54 (GISGGQDS) coordinates ATP. Aspartate 53 is a binding site for Mg(2+). Arginine 139 contacts deamido-NAD(+). Threonine 159 lines the ATP pocket. Mg(2+) is bound at residue glutamate 164. Deamido-NAD(+) contacts are provided by lysine 172 and aspartate 179. ATP contacts are provided by lysine 188 and threonine 210. Deamido-NAD(+) is bound at residue 259–260 (HK).

This sequence belongs to the NAD synthetase family. In terms of assembly, homodimer.

The enzyme catalyses deamido-NAD(+) + NH4(+) + ATP = AMP + diphosphate + NAD(+) + H(+). The protein operates within cofactor biosynthesis; NAD(+) biosynthesis; NAD(+) from deamido-NAD(+) (ammonia route): step 1/1. Catalyzes the ATP-dependent amidation of deamido-NAD to form NAD. Uses ammonia as a nitrogen source. The protein is NH(3)-dependent NAD(+) synthetase of Staphylococcus aureus (strain N315).